A 62-amino-acid chain; its full sequence is Potassium channel toxin alpha-KTx 10.1 (62 aa).

Positions 1–22 (MEGIAKITLILLFLFVTMHTFA) are cleaved as a signal peptide. A propeptide spanning residues 23–28 (NWNTEA) is cleaved from the precursor. 3 disulfide bridges follow: C31/C50, C36/C55, and C40/C57. Position 60 is a tyrosine amide (Y60).

It belongs to the short scorpion toxin superfamily. Potassium channel inhibitor family. Alpha-KTx 10 subfamily. As to expression, expressed by the venom gland.

The protein localises to the secreted. Functionally, blocks Shaker B (Sh) and voltage-gated potassium-channels Kv1.1/KCNA1, Kv1.2/KCNA2, Kv1.3/KCNA3. Also inhibits small conductance calcium-activated potassium channels (KCNN) and intermediate conductance calcium-activated potassium channel (KCa3.1/KCNN4). In Centruroides noxius (Mexican scorpion), this protein is Potassium channel toxin alpha-KTx 10.1.